The primary structure comprises 364 residues: Dihydroorotate dehydrogenase (quinone) (364 aa).

FMN is bound by residues 78–82 (AGFDK) and threonine 102. Lysine 82 contacts substrate. 127-131 (NRMGF) contributes to the substrate binding site. Residues asparagine 156 and asparagine 189 each coordinate FMN. Asparagine 189 provides a ligand contact to substrate. Serine 192 serves as the catalytic Nucleophile. Asparagine 194 provides a ligand contact to substrate. FMN is bound by residues lysine 227 and threonine 255. Position 256–257 (256–257 (NT)) interacts with substrate. Residues glycine 285, glycine 314, and 335–336 (YT) each bind FMN.

The protein belongs to the dihydroorotate dehydrogenase family. Type 2 subfamily. In terms of assembly, monomer. It depends on FMN as a cofactor.

It localises to the cell membrane. The enzyme catalyses (S)-dihydroorotate + a quinone = orotate + a quinol. It functions in the pathway pyrimidine metabolism; UMP biosynthesis via de novo pathway; orotate from (S)-dihydroorotate (quinone route): step 1/1. Functionally, catalyzes the conversion of dihydroorotate to orotate with quinone as electron acceptor. The chain is Dihydroorotate dehydrogenase (quinone) from Thermosynechococcus vestitus (strain NIES-2133 / IAM M-273 / BP-1).